Reading from the N-terminus, the 71-residue chain is Large ribosomal subunit protein uL29 (71 aa).

The protein belongs to the universal ribosomal protein uL29 family.

The protein is Large ribosomal subunit protein uL29 of Rickettsia akari (strain Hartford).